The sequence spans 79 residues: MKTFLFLFAVLFFLDPAKNAFFDEKCSRVNGRCTASCLKNEELVALCQKNLKCCVTVQPCGKSKSNQSDEGSGHMGTWG.

Residues 1–20 form the signal peptide; the sequence is MKTFLFLFAVLFFLDPAKNA. Cystine bridges form between Cys26–Cys53, Cys33–Cys47, and Cys37–Cys54.

The protein belongs to the beta-defensin family. Expressed in testis and to a lesser extent in epididymis (caput, corpus and cauda). Also weakly expressed in kidneys and colon.

It is found in the secreted. Functionally, has antibacterial activity. This is Beta-defensin 15 (Defb15) from Mus musculus (Mouse).